The following is a 217-amino-acid chain: Oxygen regulatory protein NreC (217 aa).

A Response regulatory domain is found at 2–119; that stretch reads KIVIADDHAV…QLLLAIRTVY (118 aa). Asp-53 bears the 4-aspartylphosphate mark. Positions 148–213 constitute an HTH luxR-type domain; it reads TSDPFKILSK…ELVEYALKKK (66 aa). Positions 172–191 form a DNA-binding region, H-T-H motif; that stretch reads NKEIAEKLFVSVKTVEAHKT.

In terms of processing, phosphorylated by NreB.

The protein resides in the cytoplasm. Its function is as follows. Member of the two-component regulatory system NreB/NreC involved in the control of dissimilatory nitrate/nitrite reduction in response to oxygen. Phosphorylated NreC binds to a GC-rich palindromic sequence at the promoters of the nitrate (narGHJI) and nitrite (nir) reductase operons, as well as the putative nitrate transporter gene narT, and activates their expression. The protein is Oxygen regulatory protein NreC (nreC) of Staphylococcus aureus (strain bovine RF122 / ET3-1).